Consider the following 613-residue polypeptide: Probable indole-3-acetic acid-amido synthetase GH3.12 (613 aa).

It belongs to the IAA-amido conjugating enzyme family. As to expression, expressed in roots.

Its function is as follows. May catalyze the synthesis of indole-3-acetic acid (IAA)-amino acid conjugates, providing a mechanism for the plant to cope with the presence of excess auxin. The chain is Probable indole-3-acetic acid-amido synthetase GH3.12 (GH3.12) from Oryza sativa subsp. japonica (Rice).